Consider the following 150-residue polypeptide: 3-hydroxyacyl-[acyl-carrier-protein] dehydratase FabZ (150 aa).

Histidine 54 is a catalytic residue.

It belongs to the thioester dehydratase family. FabZ subfamily.

Its subcellular location is the cytoplasm. It carries out the reaction a (3R)-hydroxyacyl-[ACP] = a (2E)-enoyl-[ACP] + H2O. Involved in unsaturated fatty acids biosynthesis. Catalyzes the dehydration of short chain beta-hydroxyacyl-ACPs and long chain saturated and unsaturated beta-hydroxyacyl-ACPs. This is 3-hydroxyacyl-[acyl-carrier-protein] dehydratase FabZ from Aliivibrio fischeri (strain ATCC 700601 / ES114) (Vibrio fischeri).